Reading from the N-terminus, the 227-residue chain is ATP-dependent dethiobiotin synthetase BioD (227 aa).

Position 13-18 (13-18) interacts with ATP; that stretch reads DIGKTY. Threonine 17 provides a ligand contact to Mg(2+). Lysine 38 is an active-site residue. Serine 42 contributes to the substrate binding site. ATP-binding positions include aspartate 55, 116-119, and 179-180; these read EGSG and NN. The Mg(2+) site is built by aspartate 55 and glutamate 116.

The protein belongs to the dethiobiotin synthetase family. Homodimer. The cofactor is Mg(2+).

It is found in the cytoplasm. The catalysed reaction is (7R,8S)-7,8-diammoniononanoate + CO2 + ATP = (4R,5S)-dethiobiotin + ADP + phosphate + 3 H(+). It participates in cofactor biosynthesis; biotin biosynthesis; biotin from 7,8-diaminononanoate: step 1/2. Catalyzes a mechanistically unusual reaction, the ATP-dependent insertion of CO2 between the N7 and N8 nitrogen atoms of 7,8-diaminopelargonic acid (DAPA, also called 7,8-diammoniononanoate) to form a ureido ring. The polypeptide is ATP-dependent dethiobiotin synthetase BioD (Clostridium botulinum (strain Langeland / NCTC 10281 / Type F)).